A 324-amino-acid chain; its full sequence is MENAKIIGFGLYTPKNLVENERLQEFLETSDEWIRSRTGIERRYISLDENTSDLAVEASKKALNQAGLSAEEIDLIIVATVTPDNFTPSTACIVQDKLGAKNAWAFDINAACTGFIYALKLGRSLIRSGEAKNALIIGAETLSKALNWEDRGSCVLFGDGAGAIVLTSTEEDCGIKCVNVKSDGSKGDSLVIQGLPLNSPFKDGREVSKNYINMNGREIFKFATKVMEESIVEILEKENIKIEDISAIIPHQANLRIIDYVVKRLGIPREKFVTNLQNYGNTSGASIPIALCESINEGNLKKGDNIIMVGFGGGLTWGAALIKL.

Catalysis depends on residues Cys112 and His251. The ACP-binding stretch occupies residues 252–256 (QANLR). Residue Asn281 is part of the active site.

This sequence belongs to the thiolase-like superfamily. FabH family. As to quaternary structure, homodimer.

It is found in the cytoplasm. It carries out the reaction malonyl-[ACP] + acetyl-CoA + H(+) = 3-oxobutanoyl-[ACP] + CO2 + CoA. Its pathway is lipid metabolism; fatty acid biosynthesis. Functionally, catalyzes the condensation reaction of fatty acid synthesis by the addition to an acyl acceptor of two carbons from malonyl-ACP. Catalyzes the first condensation reaction which initiates fatty acid synthesis and may therefore play a role in governing the total rate of fatty acid production. Possesses both acetoacetyl-ACP synthase and acetyl transacylase activities. Its substrate specificity determines the biosynthesis of branched-chain and/or straight-chain of fatty acids. This Clostridium perfringens (strain SM101 / Type A) protein is Beta-ketoacyl-[acyl-carrier-protein] synthase III.